Here is a 225-residue protein sequence, read N- to C-terminus: Small ribosomal subunit protein uS3 (225 aa).

The KH type-2 domain occupies 38–106 (LRAFLRRKLS…DVALNIVEIR (69 aa)).

The protein belongs to the universal ribosomal protein uS3 family. In terms of assembly, part of the 30S ribosomal subunit. Forms a tight complex with proteins S10 and S14.

Functionally, binds the lower part of the 30S subunit head. Binds mRNA in the 70S ribosome, positioning it for translation. In Gluconobacter oxydans (strain 621H) (Gluconobacter suboxydans), this protein is Small ribosomal subunit protein uS3.